Reading from the N-terminus, the 271-residue chain is Protein FAM110D (271 aa).

Residues 1–13 show a composition bias toward polar residues; that stretch reads MLLSSPTTPSRGR. Disordered regions lie at residues 1 to 84, 118 to 149, and 186 to 242; these read MLLS…PDSL, DAAP…TGKR, and PQSW…GRPT.

This sequence belongs to the FAM110 family.

This chain is Protein FAM110D, found in Mus musculus (Mouse).